A 404-amino-acid polypeptide reads, in one-letter code: Phosphopentomutase (404 aa).

Mn(2+) is bound by residues Asp10, Asp303, His308, Asp344, His345, and His356.

The protein belongs to the phosphopentomutase family. Mn(2+) is required as a cofactor.

It localises to the cytoplasm. The catalysed reaction is 2-deoxy-alpha-D-ribose 1-phosphate = 2-deoxy-D-ribose 5-phosphate. It catalyses the reaction alpha-D-ribose 1-phosphate = D-ribose 5-phosphate. The protein operates within carbohydrate degradation; 2-deoxy-D-ribose 1-phosphate degradation; D-glyceraldehyde 3-phosphate and acetaldehyde from 2-deoxy-alpha-D-ribose 1-phosphate: step 1/2. Isomerase that catalyzes the conversion of deoxy-ribose 1-phosphate (dRib-1-P) and ribose 1-phosphate (Rib-1-P) to deoxy-ribose 5-phosphate (dRib-5-P) and ribose 5-phosphate (Rib-5-P), respectively. This is Phosphopentomutase from Shewanella baltica (strain OS155 / ATCC BAA-1091).